A 90-amino-acid polypeptide reads, in one-letter code: Probable Fe(2+)-trafficking protein (90 aa).

It belongs to the Fe(2+)-trafficking protein family.

In terms of biological role, could be a mediator in iron transactions between iron acquisition and iron-requiring processes, such as synthesis and/or repair of Fe-S clusters in biosynthetic enzymes. The polypeptide is Probable Fe(2+)-trafficking protein (Aeromonas hydrophila subsp. hydrophila (strain ATCC 7966 / DSM 30187 / BCRC 13018 / CCUG 14551 / JCM 1027 / KCTC 2358 / NCIMB 9240 / NCTC 8049)).